A 365-amino-acid polypeptide reads, in one-letter code: MKVTILASAILALINGALALPANTPTLDVTLTQVDNTRIKATVKNTGNEKVTFVHLNFFQDAAPVKKVSLFRNGTEVEFTGIKRRLLTEGLSDDGLTTLAPGGTFEDEFDVASTGDLTEGGTVTIRTDGFVPITTDRKVSGYIPYQSNELEIEVDPAKAAAVPQAIKLLDRRTKVASCSGSRASALSTALRNAGSLANAAASAASSGSSTRFQEYFKTTSRRPENVGGRFRAVGREASSQSSGKTTYYCNDPYGYCDSNTLAYTLPSSNLIANCDIYYSYLPALTSSCHAQDQATTTLHEFTHAPAVYSPGTDDYAYGYRASTALSASQALLNADTYALFANGSPLLPLSNHSKCRNTMVWRTLL.

An N-terminal signal peptide occupies residues 1–19 (MKVTILASAILALINGALA). Positions 20 to 172 (LPANTPTLDV…PQAIKLLDRR (153 aa)) are excised as a propeptide. Asn73 is a glycosylation site (N-linked (GlcNAc...) asparagine). 2 disulfides stabilise this stretch: Cys178–Cys249 and Cys256–Cys274. His299 lines the Zn(2+) pocket. The active site involves Glu300. His303 and Asp314 together coordinate Zn(2+). Residue Asn351 is glycosylated (N-linked (GlcNAc...) asparagine).

It belongs to the peptidase M35 family. Zn(2+) serves as cofactor.

It localises to the secreted. The catalysed reaction is Preferential cleavage of bonds with hydrophobic residues in P1'. Also 3-Asn-|-Gln-4 and 8-Gly-|-Ser-9 bonds in insulin B chain.. Secreted metalloproteinase that allows assimilation of proteinaceous substrates. Shows high activities on basic nuclear substrates such as histone and protamine. May be involved in virulence. In Aspergillus fumigatus (Neosartorya fumigata), this protein is Neutral protease 2 homolog mep20 (mep20).